The following is an 829-amino-acid chain: E3 ubiquitin-protein ligase Jade-2 (829 aa).

The tract at residues 1–52 (MEEKRRKYSISSDNSDTTDGHVTSTSASRCSKLPSSTKSGWPRQNEKKPSEV) is disordered. 2 positions are modified to phosphoserine: Ser9 and Ser15. Polar residues predominate over residues 9-39 (SISSDNSDTTDGHVTSTSASRCSKLPSSTKS). N6-acetyllysine is present on residues Lys32 and Lys38. Ser117 carries the post-translational modification Phosphoserine. A PHD-type 1 zinc finger spans residues 199–249 (DVVCDVCRSPEGEDGNEMVFCDKCNVCVHQACYGILKVPTGSWLCRTCALG). A C2HC pre-PHD-type zinc finger spans residues 251–285 (QPKCLLCPKRGGALKPTRSGTKWVHVSCALWIPEV). An N6-acetyllysine modification is found at Lys298. A PHD-type 2 zinc finger spans residues 309–365 (LSCSLCKECTGTCIQCSMPSCITAFHVTCAFDRGLEMRTILADNDEVKFKSLCQEHS). 3 disordered regions span residues 362 to 383 (QEHS…PSQA), 517 to 555 (REPS…AGPE), and 622 to 817 (SFMR…REAG). The span at 522-535 (RRSKGKKNDSKRKG) shows a compositional bias: basic residues. Basic and acidic residues predominate over residues 536–552 (REGPKGSSPEKKEKVKA). The segment covering 637 to 650 (KARGRTRLPAKKKP) has biased composition (basic residues). Residues 776-786 (ERPKVSLHFDT) are compositionally biased toward basic and acidic residues. Over residues 792–806 (FSDEEMSDSEVEAED) the composition is skewed to acidic residues.

Belongs to the JADE family. As to quaternary structure, component of the HBO1 complex composed at least of ING4 or ING5, MYST2/HBO1, MEAF6, and one of JADE1, JADE2 and JADE3. Interacts (via C-terminus) with KDM1A (via AOD/Tower domain).

The enzyme catalyses S-ubiquitinyl-[E2 ubiquitin-conjugating enzyme]-L-cysteine + [acceptor protein]-L-lysine = [E2 ubiquitin-conjugating enzyme]-L-cysteine + N(6)-ubiquitinyl-[acceptor protein]-L-lysine.. It functions in the pathway protein modification; protein ubiquitination. Scaffold subunit of some HBO1 complexes, which have a histone H4 acetyltransferase activity. Acts as a E3 ubiquitin-protein ligase mediating the ubiquitination and subsequent proteasomal degradation of target protein histone demethylase KDM1A. Also acts as a ubiquitin ligase E3 toward itself. Positive regulator of neurogenesis. This is E3 ubiquitin-protein ligase Jade-2 (Jade2) from Mus musculus (Mouse).